Consider the following 108-residue polypeptide: NADH dehydrogenase [ubiquinone] flavoprotein 3, mitochondrial (108 aa).

The transit peptide at 1–35 (MAVSLLLRGGRIRALKAALLEAKVFRGELASTVPL) directs the protein to the mitochondrion. The interval 32–67 (TVPLSTESENNKKAAGPTSKTESVFKEPTLVPESSD) is disordered. Ser-105 is modified (phosphoserine).

The protein belongs to the complex I NDUFV3 subunit family. Complex I is composed of 45 different subunits. This is a component of the flavoprotein-sulfur (FP) fragment of the enzyme.

The protein resides in the mitochondrion inner membrane. Its function is as follows. Accessory subunit of the mitochondrial membrane respiratory chain NADH dehydrogenase (Complex I), that is believed not to be involved in catalysis. Complex I functions in the transfer of electrons from NADH to the respiratory chain. The immediate electron acceptor for the enzyme is believed to be ubiquinone. May be the terminally assembled subunit of Complex I. This chain is NADH dehydrogenase [ubiquinone] flavoprotein 3, mitochondrial (Ndufv3), found in Rattus norvegicus (Rat).